Reading from the N-terminus, the 658-residue chain is Glycogen debranching enzyme (658 aa).

Asp-336 (nucleophile) is an active-site residue. The active-site Proton donor is Glu-371. A disordered region spans residues 460–484 (ANGEENRDGSNNNHSNNHGKEGLGG).

Belongs to the glycosyl hydrolase 13 family.

It catalyses the reaction Hydrolysis of (1-&gt;6)-alpha-D-glucosidic linkages to branches with degrees of polymerization of three or four glucose residues in limit dextrin.. The protein operates within glycan degradation; glycogen degradation. In terms of biological role, removes maltotriose and maltotetraose chains that are attached by 1,6-alpha-linkage to the limit dextrin main chain, generating a debranched limit dextrin. This chain is Glycogen debranching enzyme, found in Escherichia fergusonii (strain ATCC 35469 / DSM 13698 / CCUG 18766 / IAM 14443 / JCM 21226 / LMG 7866 / NBRC 102419 / NCTC 12128 / CDC 0568-73).